An 847-amino-acid chain; its full sequence is Alpha-glucuronidase A (847 aa).

A signal peptide spans 1–22 (MRSFLLLTALLGVAAVAEDGLA). N-linked (GlcNAc...) asparagine glycosylation is found at Asn-48, Asn-78, Asn-227, Asn-315, Asn-349, Asn-457, Asn-472, Asn-534, Asn-583, Asn-689, Asn-738, Asn-739, and Asn-769.

This sequence belongs to the glycosyl hydrolase 67 family.

The protein localises to the secreted. The catalysed reaction is an alpha-D-glucuronoside + H2O = D-glucuronate + an alcohol. Functionally, alpha-glucuronidase involved in the hydrolysis of xylan, a major structural heterogeneous polysaccharide found in plant biomass representing the second most abundant polysaccharide in the biosphere, after cellulose. Releases 4-O-methylglucuronic acid from xylan. The chain is Alpha-glucuronidase A (aguA) from Emericella nidulans (strain FGSC A4 / ATCC 38163 / CBS 112.46 / NRRL 194 / M139) (Aspergillus nidulans).